The following is a 1652-amino-acid chain: Venom factor (1652 aa).

An N-terminal signal peptide occupies residues 1-22; the sequence is MEGMALYLVAALLIGFPASSFG. 4 residues coordinate Mg(2+): P519, D542, V543, and D545. Cystine bridges form between C547-C808, C616-C651, C684-C711, C685-C718, C698-C719, C864-C1502, C1347-C1478, C1378-C1447, C1495-C1500, C1507-C1579, C1526-C1650, and C1626-C1635. A propeptide spanning residues 657-740 is cleaved from the precursor; it reads RRRRRSVVLL…REDELFLARS (84 aa). A C3a-like domain region spans residues 661–739; it reads RSVVLLDSKA…KREDELFLAR (79 aa). Residues 684–719 form the Anaphylatoxin-like domain; the sequence is CCEDGMHENPMGYSCEKREKYIQEGDACKAAFLECC. Positions 743 to 754 are factor B binding site; sequence EDEFFGEDNIIS. The propeptide occupies 992–1270; the sequence is HLIITPSGCG…VVGFQGLAEY (279 aa). The interval 992-1270 is C3d-like domain; that stretch reads HLIITPSGCG…VVGFQGLAEY (279 aa). A cross-link (isoglutamyl cysteine thioester (Cys-Gln)) is located at residues 1000–1003; it reads CGEQ. A factor H binding site region spans residues 1197-1260; it reads VLMAASTERN…GGTYGQTQAT (64 aa). One can recognise an NTR domain in the interval 1507–1650; the sequence is CSLLNQQKKI…LSNTLTIFGC (144 aa).

Belongs to the venom complement C3 homolog family. In terms of assembly, heterotrimer of alpha, beta and gamma chains; disulfide-linked. Is active with factor B in the presence of factor D. Post-translationally, first processed by the removal of 4 Arg residues by furin-type protease, forming two chains, alpha and gamma/beta precursor, linked by a disulfide bond. Probably, a cobrin-like protease cleaves the C3a-like domain and then the C3d-like domain, generating the mature venom factor (VF). Expressed by the venom gland.

The protein localises to the secreted. Functionally, complement-activating protein in venom. It is a structural and functional analog of complement component C3b, the activated form of C3. It binds factor B (CFB), which is subsequently cleaved by factor D (CFD) to form the bimolecular complex VF/Bb. VF/Bb is a C3/C5 convertase that cleaves both complement components C3 and C5. Structurally, it resembles the C3b degradation product C3c, which is not able to form a C3/C5 convertase. Unlike C3b/Bb, VF/Bb is a stable complex and completely resistant to the actions of complement regulatory factors H (CFH) and I (CFI). Therefore, VF continuously activates complement resulting in the depletion of complement activity. The polypeptide is Venom factor (Crotalus adamanteus (Eastern diamondback rattlesnake)).